Reading from the N-terminus, the 615-residue chain is 1-deoxy-D-xylulose-5-phosphate synthase (615 aa).

Residues histidine 77 and 118–120 (GHS) contribute to the thiamine diphosphate site. Mg(2+) is bound at residue aspartate 149. Thiamine diphosphate-binding positions include 150 to 151 (GA), asparagine 178, tyrosine 286, and glutamate 367. Asparagine 178 contributes to the Mg(2+) binding site.

This sequence belongs to the transketolase family. DXPS subfamily. In terms of assembly, homodimer. Requires Mg(2+) as cofactor. Thiamine diphosphate serves as cofactor.

It catalyses the reaction D-glyceraldehyde 3-phosphate + pyruvate + H(+) = 1-deoxy-D-xylulose 5-phosphate + CO2. It participates in metabolic intermediate biosynthesis; 1-deoxy-D-xylulose 5-phosphate biosynthesis; 1-deoxy-D-xylulose 5-phosphate from D-glyceraldehyde 3-phosphate and pyruvate: step 1/1. In terms of biological role, catalyzes the acyloin condensation reaction between C atoms 2 and 3 of pyruvate and glyceraldehyde 3-phosphate to yield 1-deoxy-D-xylulose-5-phosphate (DXP). The protein is 1-deoxy-D-xylulose-5-phosphate synthase of Glaesserella parasuis serovar 5 (strain SH0165) (Haemophilus parasuis).